A 291-amino-acid polypeptide reads, in one-letter code: MQSQTNPNPSLPDDLILSCVARVSRLYYPALSLVSKSFRSLIASPELYKTRSLLDRTESCLYILYCTSNTWHEGPRLRVKLMSCTACVLDEKIYVSGRCKDGDSMTFQVFDTNTQTWDPLSVPCSETKHDFHYKIVRFDGKLHLVSYKGVDAYNSKEGRWDLVTPSIEHNKYLYDCYRNIGNVWYTIVKGDISTSVWWYHSEEREWRDLKGMVGLPKFPIDACLRMVDYGGKMAVLWDDYLPGRRKKMIWCAEIALERRGSLEIWGKVEWFAHVLTVPRQYEFVKVLAATL.

The 47-residue stretch at 5–51 (TNPNPSLPDDLILSCVARVSRLYYPALSLVSKSFRSLIASPELYKTR) folds into the F-box domain. Kelch repeat units follow at residues 46–91 (ELYK…VLDE), 92–140 (KIYV…RFDG), 142–187 (LHLV…WYTI), and 189–232 (KGDI…YGGK).

The protein is F-box/kelch-repeat protein At5g38670 of Arabidopsis thaliana (Mouse-ear cress).